Reading from the N-terminus, the 88-residue chain is RNA-binding protein Hfq (88 aa).

The Sm domain occupies 9–68 (DPFLNALRRERIPVSIYLVNGIKLQGQIESFDQFVILLKNTVNQMVYKHAISTVVPARAV). Residues 66-88 (RAVSHHSGEQQRAPSDRPEKTED) are disordered. Over residues 71–88 (HSGEQQRAPSDRPEKTED) the composition is skewed to basic and acidic residues.

This sequence belongs to the Hfq family. Homohexamer.

In terms of biological role, RNA chaperone that binds small regulatory RNA (sRNAs) and mRNAs to facilitate mRNA translational regulation in response to envelope stress, environmental stress and changes in metabolite concentrations. Also binds with high specificity to tRNAs. This chain is RNA-binding protein Hfq, found in Vibrio atlanticus (strain LGP32) (Vibrio splendidus (strain Mel32)).